The chain runs to 416 residues: Cell division control protein 3 (416 aa).

The 276-residue stretch at 32–307 (RGFSLNIMAI…ENYRTEKLKR (276 aa)) folds into the Septin-type G domain. The segment at 42–49 (GESGLGKA) is G1 motif. GTP is bound by residues 42-49 (GESGLGKA), Ser-79, Gly-105, 184-192 (KSDTLTDEE), Gly-240, and Arg-256. The interval 102–105 (TAPG) is G3 motif. The segment at 183-186 (AKSD) is G4 motif. Residues 323 to 399 (AAKQEEERAL…QLEKQKLLPQ (77 aa)) adopt a coiled-coil conformation. A disordered region spans residues 392–416 (EKQKLLPQDPPAQPAPQKSRKGFLR).

This sequence belongs to the TRAFAC class TrmE-Era-EngA-EngB-Septin-like GTPase superfamily. Septin GTPase family.

The protein resides in the bud neck. Its function is as follows. Plays a role in the cell cycle. Involved in the formation of the ring of filaments in the neck region at the mother-bud junction during mitosis. This Candida albicans (Yeast) protein is Cell division control protein 3 (CDC3).